Reading from the N-terminus, the 316-residue chain is PDZ and LIM domain protein 3 (316 aa).

Residues 1–84 (MPQNVVLPGP…QLCLKIDRAE (84 aa)) enclose the PDZ domain. 2 positions are modified to phosphoserine: S18 and S93. Omega-N-methylarginine is present on R164. Positions 244–303 (PLCDKCGSGIVGAVVKARDKYRHPECFVCADCNLNLKQKGYFFVEGELYCETHARARTRP) constitute an LIM zinc-binding domain.

In terms of assembly, interacts with ACTN2. Forms a heterodimer with PDLIM4 (via LIM domain).

It is found in the cytoplasm. The protein resides in the myofibril. It localises to the sarcomere. Its subcellular location is the z line. Its function is as follows. May play a role in the organization of actin filament arrays within muscle cells. The protein is PDZ and LIM domain protein 3 (Pdlim3) of Mus musculus (Mouse).